The following is a 461-amino-acid chain: Cysteine--tRNA ligase (461 aa).

Cys-28 serves as a coordination point for Zn(2+). The short motif at 30 to 40 (VTIYDLCHIGH) is the 'HIGH' region element. Positions 211, 236, and 240 each coordinate Zn(2+). A 'KMSKS' region motif is present at residues 268–272 (KMSKS). Lys-271 is a binding site for ATP.

It belongs to the class-I aminoacyl-tRNA synthetase family. As to quaternary structure, monomer. Zn(2+) serves as cofactor.

It is found in the cytoplasm. It catalyses the reaction tRNA(Cys) + L-cysteine + ATP = L-cysteinyl-tRNA(Cys) + AMP + diphosphate. The chain is Cysteine--tRNA ligase from Aliivibrio fischeri (strain ATCC 700601 / ES114) (Vibrio fischeri).